The sequence spans 204 residues: MTEWEAATPAVAETPDIKLFGKWSTDDVQINDISLQDYIAVKEKYAKYLPHSAGRYAAKRFRKAQCPIVERLTNSMMMHGRNNGKKLMTVRIVKHAFEIIHLLTGENPLQVLVNAIINSGPREDSTRIGRAGTVRRQAVDVSPLRRVNQAIWLLCTGAREAAFRNIKTIAECLADELINAAKGSSNSYAIKKKDELERVAKSNR.

At M1 the chain carries N-acetylmethionine. Residue T2 is modified to N-acetylthreonine; in 40S ribosomal protein S5, N-terminally processed. The residue at position 14 (T14) is a Phosphothreonine. K47 carries the post-translational modification N6-acetyllysine; alternate. Residue K47 forms a Glycyl lysine isopeptide (Lys-Gly) (interchain with G-Cter in SUMO2); alternate linkage. At S142 the chain carries Phosphoserine.

It belongs to the universal ribosomal protein uS7 family. In terms of assembly, component of the small ribosomal subunit. Part of the small subunit (SSU) processome, composed of more than 70 proteins and the RNA chaperone small nucleolar RNA (snoRNA) U3.

The protein resides in the cytoplasm. It localises to the nucleus. It is found in the nucleolus. In terms of biological role, component of the small ribosomal subunit. The ribosome is a large ribonucleoprotein complex responsible for the synthesis of proteins in the cell. Part of the small subunit (SSU) processome, first precursor of the small eukaryotic ribosomal subunit. During the assembly of the SSU processome in the nucleolus, many ribosome biogenesis factors, an RNA chaperone and ribosomal proteins associate with the nascent pre-rRNA and work in concert to generate RNA folding, modifications, rearrangements and cleavage as well as targeted degradation of pre-ribosomal RNA by the RNA exosome. This Mus musculus (Mouse) protein is Small ribosomal subunit protein uS7 (Rps5).